Consider the following 649-residue polypeptide: V-type ATP synthase subunit I (649 aa).

Transmembrane regions (helical) follow at residues 312–332 (FFSF…GLVF), 360–380 (FMIL…FFGV), 453–473 (FIDN…LSLG), 485–505 (IGWV…LQAV), 520–540 (GLVG…GGVI), 556–576 (VFSD…GAMV), and 593–613 (ILII…GGVI).

Belongs to the V-ATPase 116 kDa subunit family.

It localises to the cell membrane. Produces ATP from ADP in the presence of a proton gradient across the membrane. The sequence is that of V-type ATP synthase subunit I (atpI) from Chlamydia trachomatis serovar D (strain ATCC VR-885 / DSM 19411 / UW-3/Cx).